The chain runs to 503 residues: Na(+)-translocating NADH-quinone reductase subunit B (503 aa).

The next 5 membrane-spanning stretches (helical) occupy residues 55–75 (MMLVVIALFPATFVAIWNSGL), 94–114 (ISGFGSYLSFVYKEIHIVPIL), 120–140 (IFIPLLTISYVVGGTCEVLFA), 161–181 (TLPPTIPYWMAALGIAFGIVV), and 186–206 (FGGTGMNILNPALSGRAFLFF). Position 248 is an FMN phosphoryl threonine (threonine 248). Transmembrane regions (helical) follow at residues 361-381 (TSTFACLLGAIFLIVTGIASW), 386-406 (AFGIGAFLTGWLFKFISVLIV), 417-437 (FFIPAYRQLFLGGLAFGLVFM), 452-472 (WIYGFFIGFMTIVIRLINPAY), and 475-495 (GVMLAILLGNVFAPLIDYFAV).

Belongs to the NqrB/RnfD family. In terms of assembly, composed of six subunits; NqrA, NqrB, NqrC, NqrD, NqrE and NqrF. Requires FMN as cofactor.

It is found in the cell inner membrane. It carries out the reaction a ubiquinone + n Na(+)(in) + NADH + H(+) = a ubiquinol + n Na(+)(out) + NAD(+). Its function is as follows. NQR complex catalyzes the reduction of ubiquinone-1 to ubiquinol by two successive reactions, coupled with the transport of Na(+) ions from the cytoplasm to the periplasm. NqrA to NqrE are probably involved in the second step, the conversion of ubisemiquinone to ubiquinol. This is Na(+)-translocating NADH-quinone reductase subunit B from Chlamydia pneumoniae (Chlamydophila pneumoniae).